Here is a 139-residue protein sequence, read N- to C-terminus: Class I hydrophobin A (139 aa).

Positions 1–18 are cleaved as a signal peptide; sequence MKFSIAAAVLALASAVVA. Intrachain disulfides connect cysteine 45–cysteine 113, cysteine 53–cysteine 107, cysteine 54–cysteine 88, and cysteine 114–cysteine 133.

The protein belongs to the fungal hydrophobin family. As to quaternary structure, self-assembles to form functional amyloid fibrils called rodlets. Self-assembly into fibrillar rodlets occurs spontaneously at hydrophobic:hydrophilic interfaces and the rodlets further associate laterally to form amphipathic monolayers.

The protein localises to the secreted. Its subcellular location is the cell wall. In terms of biological role, aerial growth, conidiation, and dispersal of filamentous fungi in the environment rely upon a capability of their secreting small amphipathic proteins called hydrophobins (HPBs) with low sequence identity. Class I can self-assemble into an outermost layer of rodlet bundles on aerial cell surfaces, conferring cellular hydrophobicity that supports fungal growth, development and dispersal; whereas Class II form highly ordered films at water-air interfaces through intermolecular interactions but contribute nothing to the rodlet structure. HYPA is a class I hydrophobin that contributes to surface hydrophobicity, and prevents recognition by the cellular immune defense system. The protein is Class I hydrophobin A of Arthroderma benhamiae (strain ATCC MYA-4681 / CBS 112371) (Trichophyton mentagrophytes).